We begin with the raw amino-acid sequence, 184 residues long: Large ribosomal subunit protein bL9 (184 aa).

Positions L160–S184 are disordered. Residues D173–S184 are compositionally biased toward basic and acidic residues.

Belongs to the bacterial ribosomal protein bL9 family.

Binds to the 23S rRNA. The polypeptide is Large ribosomal subunit protein bL9 (Wolbachia pipientis wMel).